The sequence spans 159 residues: Lipoprotein LpqH (159 aa).

The N-terminal stretch at 1–21 is a signal peptide; it reads MKRGLTVAVAGAAILVAGLSG. Cys-22 carries N-palmitoyl cysteine lipidation. Cys-22 carries S-diacylglycerol cysteine lipidation. The segment at 24-51 is disordered; that stretch reads SNKSTTGSGETTTAAGTTASPGAASGPK. A compositionally biased stretch (low complexity) spans 27–49; it reads STTGSGETTTAAGTTASPGAASG.

The protein belongs to the mycobacterial 19 kDa antigen family. In terms of processing, modified by Lgt on Cys-22 with an S-linked diacylglycerol with a mixture of C16, C18 and C19 fatty acids, signal peptide is removed by LspA, modifed by Lnt with an amide-linked mixture of C16 and C19 fatty acids.

Its subcellular location is the cell membrane. Its function is as follows. Might be involved in ligand transport. A host TLR2 agonist, modifies host gene expression in response to pathogen. The protein is Lipoprotein LpqH (lpqH) of Mycobacterium tuberculosis (strain CDC 1551 / Oshkosh).